The chain runs to 514 residues: Protein phosphatase 1H (514 aa).

S7 is modified (phosphoserine). The 431-residue stretch at A77–L507 folds into the PPM-type phosphatase domain. The interval A109–E135 is disordered. T113 is modified (phosphothreonine). Phosphoserine occurs at positions 124 and 211. Residue R213 is modified to Omega-N-methylarginine. Residue S221 is modified to Phosphoserine. T224 carries the post-translational modification Phosphothreonine. Phosphoserine is present on S422.

The protein belongs to the PP2C family.

The protein localises to the nucleus. It is found in the cytoplasm. The catalysed reaction is O-phospho-L-seryl-[protein] + H2O = L-seryl-[protein] + phosphate. It carries out the reaction O-phospho-L-threonyl-[protein] + H2O = L-threonyl-[protein] + phosphate. Functionally, dephosphorylates CDKN1B at 'Thr-187', thus removing a signal for proteasomal degradation. The chain is Protein phosphatase 1H (PPM1H) from Homo sapiens (Human).